Consider the following 408-residue polypeptide: GTPase HflX (408 aa).

The 164-residue stretch at 198–361 (PRVSLVGYTN…LIVREMERHY (164 aa)) folds into the Hflx-type G domain. GTP contacts are provided by residues 204 to 211 (GYTNAGKS), 229 to 233 (FVTLD), 251 to 254 (DTVG), 317 to 320 (NKAD), and 339 to 341 (SAK). Ser-211 and Thr-231 together coordinate Mg(2+).

It belongs to the TRAFAC class OBG-HflX-like GTPase superfamily. HflX GTPase family. In terms of assembly, monomer. Associates with the 50S ribosomal subunit. Mg(2+) is required as a cofactor.

The protein localises to the cytoplasm. GTPase that associates with the 50S ribosomal subunit and may have a role during protein synthesis or ribosome biogenesis. The chain is GTPase HflX from Spirochaeta thermophila (strain ATCC 49972 / DSM 6192 / RI 19.B1).